The sequence spans 119 residues: Holo-[acyl-carrier-protein] synthase (119 aa).

Residues aspartate 7 and glutamate 53 each coordinate Mg(2+).

This sequence belongs to the P-Pant transferase superfamily. AcpS family. Requires Mg(2+) as cofactor.

Its subcellular location is the cytoplasm. It catalyses the reaction apo-[ACP] + CoA = holo-[ACP] + adenosine 3',5'-bisphosphate + H(+). In terms of biological role, transfers the 4'-phosphopantetheine moiety from coenzyme A to a Ser of acyl-carrier-protein. This Dehalococcoides mccartyi (strain ATCC BAA-2266 / KCTC 15142 / 195) (Dehalococcoides ethenogenes (strain 195)) protein is Holo-[acyl-carrier-protein] synthase.